Reading from the N-terminus, the 90-residue chain is Auxin-responsive protein SAUR23 (90 aa).

It belongs to the ARG7 family.

The protein resides in the cell membrane. Functionally, functions as a positive effector of cell expansion through modulation of auxin transport. The protein is Auxin-responsive protein SAUR23 of Arabidopsis thaliana (Mouse-ear cress).